The sequence spans 341 residues: Ribosomal RNA small subunit methyltransferase H (341 aa).

S-adenosyl-L-methionine-binding positions include 47-49 (GGY), Asp-64, Phe-91, Asp-109, and Gln-116.

This sequence belongs to the methyltransferase superfamily. RsmH family.

It is found in the cytoplasm. The catalysed reaction is cytidine(1402) in 16S rRNA + S-adenosyl-L-methionine = N(4)-methylcytidine(1402) in 16S rRNA + S-adenosyl-L-homocysteine + H(+). Functionally, specifically methylates the N4 position of cytidine in position 1402 (C1402) of 16S rRNA. In Rhizobium leguminosarum bv. trifolii (strain WSM2304), this protein is Ribosomal RNA small subunit methyltransferase H.